A 381-amino-acid chain; its full sequence is Formate dehydrogenase, mitochondrial (381 aa).

Residues 1–25 (MAMSRVASTAARAITSPSSLVFTRE) constitute a mitochondrion transit peptide. Positions 125 and 149 each coordinate substrate. Residues threonine 150, 204-205 (RI), aspartate 224, 259-263 (PLTEK), asparagine 285, aspartate 311, and 335-338 (HISG) contribute to the NAD(+) site.

Belongs to the D-isomer specific 2-hydroxyacid dehydrogenase family. FDH subfamily. As to quaternary structure, homodimer. Found at high levels in developing tubers, at intermediate level in stems, veins, stolons, and stamens, and at low level in leaves and roots.

The protein resides in the mitochondrion. The catalysed reaction is formate + NAD(+) = CO2 + NADH. Its function is as follows. Catalyzes the NAD(+)-dependent oxidation of formate to carbon dioxide. Involved in the cell stress response. Involved in formate-dependent oxygen uptake coupled to ATP synthesis. This Solanum tuberosum (Potato) protein is Formate dehydrogenase, mitochondrial.